Here is a 341-residue protein sequence, read N- to C-terminus: Anthranilate phosphoribosyltransferase (341 aa).

5-phospho-alpha-D-ribose 1-diphosphate is bound by residues Gly81, 84-85 (GD), 91-94 (NVST), 109-117 (KHGNRSVSS), and Ser121. An anthranilate-binding site is contributed by Gly81. Ser93 contacts Mg(2+). Residue Asn112 coordinates anthranilate. Arg167 contacts anthranilate. The Mg(2+) site is built by Asp226 and Glu227.

The protein belongs to the anthranilate phosphoribosyltransferase family. In terms of assembly, homodimer. Mg(2+) is required as a cofactor.

It catalyses the reaction N-(5-phospho-beta-D-ribosyl)anthranilate + diphosphate = 5-phospho-alpha-D-ribose 1-diphosphate + anthranilate. The protein operates within amino-acid biosynthesis; L-tryptophan biosynthesis; L-tryptophan from chorismate: step 2/5. Functionally, catalyzes the transfer of the phosphoribosyl group of 5-phosphorylribose-1-pyrophosphate (PRPP) to anthranilate to yield N-(5'-phosphoribosyl)-anthranilate (PRA). In Teredinibacter turnerae (strain ATCC 39867 / T7901), this protein is Anthranilate phosphoribosyltransferase.